The sequence spans 740 residues: Gramillins biosynthetic cluster protein FGSG_11657 (740 aa).

4 disordered regions span residues 353–391 (QADS…SSIP), 414–434 (SKLS…DAAS), 514–535 (PKEQ…GSSD), and 656–686 (EHEG…PQGD). Positions 656–667 (EHEGEGRADTNR) are enriched in basic and acidic residues. Positions 668-682 (HVSTQSNMPTEQSLL) are enriched in polar residues.

It participates in mycotoxin biosynthesis. In terms of biological role, part of the gene cluster that mediates the biosynthesis of gramillins A and B, bicyclic lipopeptides that induce cell death in maize leaves but not in wheat leaves. The nonribosomal peptide synthetase GRA1 incorporates respectively a glutamic adic (Glu), a leucine (Leu), a serine (Ser), a hydroxyglutamine (HOGln), a 2-amino decanoic acid, and 2 cysteins (CysB and CysA). The biosynthesis of 2-amino decanoic acid incorporated in gramillins could be initiated by a fatty acid synthase composed of the alpha and beta subunits FGSG_00036 and FGSG_11656. The cytochrome P450 monooxygenase FGSG_15680 could hydroxylate the fatty acid chain. Subsequent oxidation to the ketone by the oxidoreductase FGSG_00048 and transamination by aminotransferase FGSG_00049 could form 2-amino-decanoic acid. On the other hand, FGSG_15680 could also be responsible for the HO-modified glutamine at the gamma-position. Whether hydroxylation occurs on the fully assembled product or on the Gln residue prior to assembly into the gramillins requires further proof. The thioredoxin FGSG_00043 could also be required for the disulfide-bond formation between CysA and CysB. The specific involvement of the remaining proteins from the cluster is more difficult to discern, but could have broader regulatory (FGSG_00040 and FGSG_11657) or enzymatic functions (FGSG_00044 and FGSG_00045). The final C-domain of GRA1 does not possess the expected sequence of a termination CT domain, often implicated in macrocyclization and release of a cyclopeptidein fungal NRPs; and the thioesterase FGSG_00047 may act in concert with the terminal C-domain of GRA1 to catalyze the formation of the macrocyclic anhydride and release of the products. The chain is Gramillins biosynthetic cluster protein FGSG_11657 from Gibberella zeae (strain ATCC MYA-4620 / CBS 123657 / FGSC 9075 / NRRL 31084 / PH-1) (Wheat head blight fungus).